A 129-amino-acid chain; its full sequence is Ribosome-binding factor A (129 aa).

The protein belongs to the RbfA family. As to quaternary structure, monomer. Binds 30S ribosomal subunits, but not 50S ribosomal subunits or 70S ribosomes.

It localises to the cytoplasm. Its function is as follows. One of several proteins that assist in the late maturation steps of the functional core of the 30S ribosomal subunit. Associates with free 30S ribosomal subunits (but not with 30S subunits that are part of 70S ribosomes or polysomes). Required for efficient processing of 16S rRNA. May interact with the 5'-terminal helix region of 16S rRNA. This Azotobacter vinelandii (strain DJ / ATCC BAA-1303) protein is Ribosome-binding factor A.